Here is a 379-residue protein sequence, read N- to C-terminus: Glutamate 5-kinase (379 aa).

Lys-14 lines the ATP pocket. Residues Ser-54, Asp-141, and Asn-153 each coordinate substrate. ATP-binding positions include 173 to 174 and 215 to 221; these read TD and TGGMATK. One can recognise a PUA domain in the interval 280–358; that stretch reads KGRLLLDIGA…DEIEPLLGYD (79 aa).

The protein belongs to the glutamate 5-kinase family.

It is found in the cytoplasm. The enzyme catalyses L-glutamate + ATP = L-glutamyl 5-phosphate + ADP. It functions in the pathway amino-acid biosynthesis; L-proline biosynthesis; L-glutamate 5-semialdehyde from L-glutamate: step 1/2. Functionally, catalyzes the transfer of a phosphate group to glutamate to form L-glutamate 5-phosphate. The polypeptide is Glutamate 5-kinase (Shewanella amazonensis (strain ATCC BAA-1098 / SB2B)).